We begin with the raw amino-acid sequence, 183 residues long: Orotate phosphoribosyltransferase (183 aa).

5-phospho-alpha-D-ribose 1-diphosphate contacts are provided by residues Arg90, Lys91, Lys94, and 115 to 123 (DDVATTGGS). Thr119 and Arg147 together coordinate orotate.

The protein belongs to the purine/pyrimidine phosphoribosyltransferase family. PyrE subfamily. As to quaternary structure, homodimer. Requires Mg(2+) as cofactor.

The enzyme catalyses orotidine 5'-phosphate + diphosphate = orotate + 5-phospho-alpha-D-ribose 1-diphosphate. The protein operates within pyrimidine metabolism; UMP biosynthesis via de novo pathway; UMP from orotate: step 1/2. Catalyzes the transfer of a ribosyl phosphate group from 5-phosphoribose 1-diphosphate to orotate, leading to the formation of orotidine monophosphate (OMP). This chain is Orotate phosphoribosyltransferase, found in Methanopyrus kandleri (strain AV19 / DSM 6324 / JCM 9639 / NBRC 100938).